A 160-amino-acid chain; its full sequence is Single-stranded DNA-binding protein 3 (160 aa).

The SSB domain occupies 2-104 (MNRVVLVGRL…IVAESVQFLE (103 aa)). The span at 106–133 (KQNGAGGSTSNNNQSETNYSNDNKTSSY) shows a compositional bias: polar residues. Residues 106 to 160 (KQNGAGGSTSNNNQSETNYSNDNKTSSYRADRSQNGDSFANEGAPVDINPDDLPF) are disordered.

In terms of assembly, homotetramer.

The sequence is that of Single-stranded DNA-binding protein 3 (ssb3) from Listeria innocua serovar 6a (strain ATCC BAA-680 / CLIP 11262).